We begin with the raw amino-acid sequence, 539 residues long: Chaperonin GroEL 2 (539 aa).

Residues 30 to 33 (TLGP), K51, 87 to 91 (DGTTT), G415, 480 to 482 (NAA), and D496 each bind ATP.

This sequence belongs to the chaperonin (HSP60) family. Forms a cylinder of 14 subunits composed of two heptameric rings stacked back-to-back. Interacts with the co-chaperonin GroES.

It is found in the cytoplasm. It catalyses the reaction ATP + H2O + a folded polypeptide = ADP + phosphate + an unfolded polypeptide.. Its function is as follows. Together with its co-chaperonin GroES, plays an essential role in assisting protein folding. The GroEL-GroES system forms a nano-cage that allows encapsulation of the non-native substrate proteins and provides a physical environment optimized to promote and accelerate protein folding. This Sphingopyxis alaskensis (strain DSM 13593 / LMG 18877 / RB2256) (Sphingomonas alaskensis) protein is Chaperonin GroEL 2.